A 236-amino-acid chain; its full sequence is Probable transcriptional regulatory protein UU295 (236 aa).

This sequence belongs to the TACO1 family.

It is found in the cytoplasm. In Ureaplasma parvum serovar 3 (strain ATCC 700970), this protein is Probable transcriptional regulatory protein UU295.